The sequence spans 334 residues: Heat-inducible transcription repressor HrcA (334 aa).

Belongs to the HrcA family.

Negative regulator of class I heat shock genes (grpE-dnaK-dnaJ and groELS operons). Prevents heat-shock induction of these operons. The chain is Heat-inducible transcription repressor HrcA from Acidovorax sp. (strain JS42).